Consider the following 122-residue polypeptide: MEIKEDVKYLESHEWFKKEGNIGIIGISDYAQSEMGDVVFIELPEVGDEVTADKACATVESVKAVFEIISPMTGKVVEINEELLDAPEKINEDAFGSWFFKVELKGESSKLMDAGKYKGLCK.

One can recognise a Lipoyl-binding domain in the interval 22–103; that stretch reads IGIIGISDYA…AFGSWFFKVE (82 aa). Lys63 is modified (N6-lipoyllysine).

It belongs to the GcvH family. In terms of assembly, the glycine cleavage system is composed of four proteins: P, T, L and H. (R)-lipoate is required as a cofactor.

Functionally, the glycine cleavage system catalyzes the degradation of glycine. The H protein shuttles the methylamine group of glycine from the P protein to the T protein. The chain is Glycine cleavage system H protein from Treponema denticola (strain ATCC 35405 / DSM 14222 / CIP 103919 / JCM 8153 / KCTC 15104).